The primary structure comprises 185 residues: Protein GrpE (185 aa).

The disordered stretch occupies residues 1 to 37; it reads MEEQEEKQYNQNIQDNEEGTQMREELQESTSAQQTLQ. A compositionally biased stretch (polar residues) spans 28 to 37; the sequence is ESTSAQQTLQ.

Belongs to the GrpE family. In terms of assembly, homodimer.

The protein localises to the cytoplasm. Its function is as follows. Participates actively in the response to hyperosmotic and heat shock by preventing the aggregation of stress-denatured proteins, in association with DnaK and GrpE. It is the nucleotide exchange factor for DnaK and may function as a thermosensor. Unfolded proteins bind initially to DnaJ; upon interaction with the DnaJ-bound protein, DnaK hydrolyzes its bound ATP, resulting in the formation of a stable complex. GrpE releases ADP from DnaK; ATP binding to DnaK triggers the release of the substrate protein, thus completing the reaction cycle. Several rounds of ATP-dependent interactions between DnaJ, DnaK and GrpE are required for fully efficient folding. This Helicobacter hepaticus (strain ATCC 51449 / 3B1) protein is Protein GrpE.